The primary structure comprises 451 residues: Signal transduction histidine-protein kinase ArlS (451 aa).

2 helical membrane passes run 11-31 (IIVT…IIIF) and 156-176 (IIAL…SYVF). The HAMP domain occupies 178–231 (TQITKPLVSLSNKMIEIRRDGFQNKLQLNTNYEEIDNLANTFNEMMSQIEESFN). Residues 239 to 451 (DASHELRTPL…NKGTTFKIIF (213 aa)) form the Histidine kinase domain. His242 is subject to Phosphohistidine; by autocatalysis.

In terms of processing, autophosphorylated.

The protein localises to the cell membrane. It catalyses the reaction ATP + protein L-histidine = ADP + protein N-phospho-L-histidine.. Its function is as follows. Member of the two-component regulatory system ArlS/ArlR involved in the regulation of adhesion, autolysis, multidrug resistance and virulence. ArlS probably functions as a sensor protein kinase which is autophosphorylated at a histidine residue and transfers its phosphate group to ArlR. This is Signal transduction histidine-protein kinase ArlS (arlS) from Staphylococcus aureus (strain MRSA252).